Here is a 182-residue protein sequence, read N- to C-terminus: Large ribosomal subunit protein uL5 (182 aa).

This sequence belongs to the universal ribosomal protein uL5 family. As to quaternary structure, part of the 50S ribosomal subunit; part of the 5S rRNA/L5/L18/L25 subcomplex. Contacts the 5S rRNA and the P site tRNA. Forms a bridge to the 30S subunit in the 70S ribosome.

This is one of the proteins that bind and probably mediate the attachment of the 5S RNA into the large ribosomal subunit, where it forms part of the central protuberance. In the 70S ribosome it contacts protein S13 of the 30S subunit (bridge B1b), connecting the 2 subunits; this bridge is implicated in subunit movement. Contacts the P site tRNA; the 5S rRNA and some of its associated proteins might help stabilize positioning of ribosome-bound tRNAs. This is Large ribosomal subunit protein uL5 from Nostoc punctiforme (strain ATCC 29133 / PCC 73102).